The sequence spans 206 residues: Ras-related protein Rab-18 (206 aa).

GTP contacts are provided by Ser-17, Gly-20, Lys-21, Ser-22, Ser-23, Asp-34, Pro-35, Thr-40, Gly-66, Lys-123, Asp-125, and Ala-152. Ser-22 contributes to the Mg(2+) binding site. 2 consecutive short sequence motifs (switch) follow at residues 31 to 45 and 63 to 80; these read DTFD…GVDF and DTAG…YYRG. Thr-40 contributes to the Mg(2+) binding site. Cys-199 is lipidated: S-palmitoyl cysteine. Cys-203 carries the cysteine methyl ester modification. Residue Cys-203 is the site of S-geranylgeranyl cysteine attachment. Positions 204–206 are cleaved as a propeptide — removed in mature form; the sequence is SML.

It belongs to the small GTPase superfamily. Rab family. Mg(2+) serves as cofactor.

It localises to the endoplasmic reticulum membrane. The protein localises to the golgi apparatus. It is found in the cis-Golgi network membrane. The protein resides in the lipid droplet. Its subcellular location is the apical cell membrane. The catalysed reaction is GTP + H2O = GDP + phosphate + H(+). Regulated by guanine nucleotide exchange factors (GEFs) which promote the exchange of bound GDP for free GTP. Regulated by GTPase activating proteins (GAPs) which increase the GTP hydrolysis activity at the ER membrane. Inhibited by GDP dissociation inhibitors (GDIs) which prevent Rab-GDP dissociation. Functionally, the small GTPases Rab are key regulators of intracellular membrane trafficking, from the formation of transport vesicles to their fusion with membranes. Rabs cycle between an inactive GDP-bound form and an active GTP-bound form that is able to recruit to membranes different sets of downstream effectors directly responsible for vesicle formation, movement, tethering and fusion. RAB18 is required for the localization of ZFYVE1 to lipid droplets and for its function in mediating the formation of endoplasmic reticulum-lipid droplets (ER-LD) contacts. Also required for maintaining endoplasmic reticulum structure. Plays a role in apical endocytosis/recycling. Plays a key role in eye and brain development and neurodegeneration. The chain is Ras-related protein Rab-18 (RAB18) from Gallus gallus (Chicken).